A 545-amino-acid polypeptide reads, in one-letter code: MSYSIGIDYGTASGRVFLINTTNGQVVSKFVKPYTHGVIEGELNGLKIPHTYALQNSNDYLEIMEEGISYIVRESKIDPVNIVGIGIDFTSSTIIFTDENLNPVHNLKQFKNNPHAYVKLWKHHGAYKEAEKLYQTAIENNNKWLGHYGYNVSSEWMIPKIMEVMNRAPEIMEKTAYIMEAGDWIVNKLTNKNVRSNCGLGFKAFWEEETGFHYDLFDKVDPKLSKVIQDKVSAPVVNIGEAVGKLDDKMAQKLGLSKDTMVSPFIIDAHASLLGIGSEKDKEMTMVMGTSTCHLMLNEKQHQVPGISGSVKGAIIPELFAYEAGQSAVGDLFEYVAKQAPKSYVDEAANRNMTVFELMNEKIKHQMPGESGLIALDWHNGNRSVLSDSNLTGCIFGLTLQTKHEDIYRAYLEATAFGTKMIMQQYQDWHMEVEKVFACGGIPKKNAVMMDIYTNVLNKKLIVMDSEYAPAIGAAILGAVSGGAHNSINDAVDAMKEPILYEINPEAEKVQRYETLFKAYKALHDIHGYKKANIMKDIQSLRVEG.

Belongs to the ribulokinase family.

The catalysed reaction is D-ribulose + ATP = D-ribulose 5-phosphate + ADP + H(+). It carries out the reaction L-ribulose + ATP = L-ribulose 5-phosphate + ADP + H(+). The protein operates within carbohydrate degradation; L-arabinose degradation via L-ribulose; D-xylulose 5-phosphate from L-arabinose (bacterial route): step 2/3. In Staphylococcus aureus (strain MRSA252), this protein is Ribulokinase.